The primary structure comprises 485 residues: Glutamyl-tRNA(Gln) amidotransferase subunit A (485 aa).

Residues Lys-79 and Ser-154 each act as charge relay system in the active site. The active-site Acyl-ester intermediate is the Ser-178.

The protein belongs to the amidase family. GatA subfamily. Heterotrimer of A, B and C subunits.

It catalyses the reaction L-glutamyl-tRNA(Gln) + L-glutamine + ATP + H2O = L-glutaminyl-tRNA(Gln) + L-glutamate + ADP + phosphate + H(+). Allows the formation of correctly charged Gln-tRNA(Gln) through the transamidation of misacylated Glu-tRNA(Gln) in organisms which lack glutaminyl-tRNA synthetase. The reaction takes place in the presence of glutamine and ATP through an activated gamma-phospho-Glu-tRNA(Gln). This is Glutamyl-tRNA(Gln) amidotransferase subunit A from Staphylococcus aureus (strain bovine RF122 / ET3-1).